A 687-amino-acid polypeptide reads, in one-letter code: Protein Smaug homolog 2 (687 aa).

Residues 160–172 (TRPEPSYHSRQGS) are compositionally biased toward basic and acidic residues. The tract at residues 160-301 (TRPEPSYHSR…NTFQEDGSGM (142 aa)) is disordered. A Phosphoserine modification is found at Ser-172. Composition is skewed to low complexity over residues 175–190 (WGGP…GPGW) and 200–211 (HVPFHPSSSVPP). Over residues 215 to 224 (SIGSNANTGL) the composition is skewed to polar residues. Phosphoserine is present on residues Ser-271, Ser-278, Ser-279, and Ser-281. The span at 278–290 (SSGSEQTEEQGSS) shows a compositional bias: low complexity. The region spanning 299–372 (SGMKDVPSWL…LKSLEKDVLE (74 aa)) is the SAM domain. Thr-400 is subject to Phosphothreonine. The disordered stretch occupies residues 402 to 464 (TAKDEGRGEP…APAPVADGDI (63 aa)). The segment covering 424–435 (GSDKGTEAKDPP) has biased composition (basic and acidic residues). The span at 448–461 (PSDSSEPAPAPVAD) shows a compositional bias: low complexity. Phosphoserine occurs at positions 548, 550, 556, 585, and 593. Arg-595 carries the post-translational modification Asymmetric dimethylarginine. Positions 600–636 (SPSLGGQGRQNLWFANPGGSNSMPSQSRSSVQRTHSL) are disordered. Polar residues predominate over residues 617-636 (GGSNSMPSQSRSSVQRTHSL). Ser-621 carries the phosphoserine modification.

The protein belongs to the SMAUG family.

Its subcellular location is the cytoplasm. The protein localises to the nucleus. Its function is as follows. Has transcriptional repressor activity. Overexpression inhibits the transcriptional activities of AP-1, p53/TP53 and CDKN1A. This Mus musculus (Mouse) protein is Protein Smaug homolog 2 (Samd4b).